The primary structure comprises 1235 residues: Spike glycoprotein (1235 aa).

The first 13 residues, 1-13 (MLFVFILLLPSCL), serve as a signal peptide directing secretion. The tract at residues 1 to 330 (MLFVFILLLP…RRVPNLPDCK (330 aa)) is receptor binding site. The Extracellular portion of the chain corresponds to 14-1176 (GYIGDFRCIQ…GTYEMYVKWP (1163 aa)). The region spanning 15–296 (YIGDFRCIQT…SYISEIKCKT (282 aa)) is the BetaCoV S1-NTD domain. Intrachain disulfides connect Cys-21-Cys-158, Cys-153-Cys-187, Cys-165-Cys-246, Cys-284-Cys-294, and Cys-329-Cys-354. Residues Asn-31, Asn-60, and Asn-134 are each glycosylated (N-linked (GlcNAc...) asparagine; by host). An N-linked (GlcNAc...) asparagine; by host glycan is attached at Asn-192. The BetaCoV S1-CTD domain maps to 327–477 (PDCKIEEWLT…GINSGTTCST (151 aa)). N-linked (GlcNAc...) asparagine; by host glycosylation is present at Asn-357. 2 cysteine pairs are disulfide-bonded: Cys-372–Cys-425 and Cys-384–Cys-475. Residues Asn-435, Asn-536, Asn-568, Asn-576, Asn-599, Asn-648, and Asn-665 are each glycosylated (N-linked (GlcNAc...) asparagine; by host). Fusion peptide stretches follow at residues 781 to 802 (SAIE…VEAY) and 800 to 820 (EAYN…VQSF). Asn-804 carries N-linked (GlcNAc...) asparagine; by host glycosylation. An intrachain disulfide couples Cys-805 to Cys-816. Residues 881–931 (QKMIASAFNNALGAIQEGFDATNSALGKIQSVVNANAEALNNLLNQLSNRF) form a heptad repeat 1 region. Residues 910 to 954 (QSVVNANAEALNNLLNQLSNRFGAISASLQEILTRLDAVEAKAQI) adopt a coiled-coil conformation. N-linked (GlcNAc...) asparagine; by host glycosylation is found at Asn-1091, Asn-1101, Asn-1120, Asn-1136, and Asn-1157. The segment at 1125–1165 (APDLSLDFEKLNVTFLDLTYEMNRIQDAIKKLNESYINLKE) is heptad repeat 2. The stretch at 1138 to 1166 (TFLDLTYEMNRIQDAIKKLNESYINLKEV) forms a coiled coil. A helical membrane pass occupies residues 1177–1197 (WYVWLLIGLAGVAVCVLLFFI). Over 1198–1235 (CCCTGCGSCCFRKCGSCCDEYGGHQDSIVIHNISAHED) the chain is Cytoplasmic. Residues 1231 to 1235 (SAHED) carry the KxHxx motif.

Belongs to the betacoronaviruses spike protein family. Homotrimer; each monomer consists of a S1 and a S2 subunit. The resulting peplomers protrude from the virus surface as spikes. Specific enzymatic cleavages in vivo yield mature proteins. The precursor is processed into S1 and S2 by host cell furin or another cellular protease to yield the mature S1 and S2 proteins. Additionally, a second cleavage leads to the release of a fusion peptide after viral attachment to host cell receptor. Post-translationally, the cytoplasmic Cys-rich domain is palmitoylated. Spike glycoprotein is digested within host endosomes.

The protein localises to the virion membrane. The protein resides in the host endoplasmic reticulum-Golgi intermediate compartment membrane. It localises to the host cell membrane. Functionally, attaches the virion to the cell membrane by interacting with host receptor, initiating the infection. Mediates fusion of the virion and cellular membranes by acting as a class I viral fusion protein. Under the current model, the protein has at least three conformational states: pre-fusion native state, pre-hairpin intermediate state, and post-fusion hairpin state. During viral and target cell membrane fusion, the coiled coil regions (heptad repeats) assume a trimer-of-hairpins structure, positioning the fusion peptide in close proximity to the C-terminal region of the ectodomain. The formation of this structure appears to drive apposition and subsequent fusion of viral and target cell membranes. Its function is as follows. Acts as a viral fusion peptide which is unmasked following S2 cleavage occurring upon virus endocytosis. In Mus musculus (Mouse), this protein is Spike glycoprotein.